The chain runs to 96 residues: Glutamyl-tRNA(Gln) amidotransferase subunit C (96 aa).

Belongs to the GatC family. In terms of assembly, heterotrimer of A, B and C subunits.

It carries out the reaction L-glutamyl-tRNA(Gln) + L-glutamine + ATP + H2O = L-glutaminyl-tRNA(Gln) + L-glutamate + ADP + phosphate + H(+). It catalyses the reaction L-aspartyl-tRNA(Asn) + L-glutamine + ATP + H2O = L-asparaginyl-tRNA(Asn) + L-glutamate + ADP + phosphate + 2 H(+). In terms of biological role, allows the formation of correctly charged Asn-tRNA(Asn) or Gln-tRNA(Gln) through the transamidation of misacylated Asp-tRNA(Asn) or Glu-tRNA(Gln) in organisms which lack either or both of asparaginyl-tRNA or glutaminyl-tRNA synthetases. The reaction takes place in the presence of glutamine and ATP through an activated phospho-Asp-tRNA(Asn) or phospho-Glu-tRNA(Gln). The chain is Glutamyl-tRNA(Gln) amidotransferase subunit C from Deinococcus radiodurans (strain ATCC 13939 / DSM 20539 / JCM 16871 / CCUG 27074 / LMG 4051 / NBRC 15346 / NCIMB 9279 / VKM B-1422 / R1).